The primary structure comprises 231 residues: Ribosomal RNA small subunit methyltransferase G (231 aa).

S-adenosyl-L-methionine is bound by residues Gly92, Leu97, 143-144 (VE), and Arg162.

It belongs to the methyltransferase superfamily. RNA methyltransferase RsmG family.

The protein resides in the cytoplasm. It carries out the reaction guanosine(527) in 16S rRNA + S-adenosyl-L-methionine = N(7)-methylguanosine(527) in 16S rRNA + S-adenosyl-L-homocysteine. In terms of biological role, specifically methylates the N7 position of guanine in position 527 of 16S rRNA. In Burkholderia thailandensis (strain ATCC 700388 / DSM 13276 / CCUG 48851 / CIP 106301 / E264), this protein is Ribosomal RNA small subunit methyltransferase G.